Reading from the N-terminus, the 657-residue chain is N-acetylgalactosaminyltransferase 7 (657 aa).

Residues 1–6 (MRLKIG) are Cytoplasmic-facing. The helical; Signal-anchor for type II membrane protein transmembrane segment at 7–29 (FILRSLLVVGSFLGLVVLWSSLT) threads the bilayer. Topologically, residues 30–657 (PRPDDPSPLS…KWEMNNIHSV (628 aa)) are lumenal. The interval 31 to 66 (RPDDPSPLSRMREDRDVNDPMPNRGGNGLAPGEDRF) is disordered. Intrachain disulfides connect C197/C435, C426/C507, C545/C562, C585/C600, and C625/C640. The segment at 206–317 (LLTSSVVIVF…VNWYAPLVAP (112 aa)) is catalytic subdomain A. The substrate site is built by D247 and R277. Mn(2+) is bound by residues D301 and H303. The catalytic subdomain B stretch occupies residues 381–443 (PYRSPAMAGG…PCSRVGHIYR (63 aa)). W412 is a binding site for substrate. Residue H440 coordinates Mn(2+). R443 lines the substrate pocket. The Ricin B-type lectin domain maps to 532-652 (VDWGEIRGFE…SKTTQKWEMN (121 aa)).

The protein belongs to the glycosyltransferase 2 family. GalNAc-T subfamily. Mn(2+) is required as a cofactor.

It is found in the golgi apparatus membrane. The catalysed reaction is L-seryl-[protein] + UDP-N-acetyl-alpha-D-galactosamine = a 3-O-[N-acetyl-alpha-D-galactosaminyl]-L-seryl-[protein] + UDP + H(+). It catalyses the reaction L-threonyl-[protein] + UDP-N-acetyl-alpha-D-galactosamine = a 3-O-[N-acetyl-alpha-D-galactosaminyl]-L-threonyl-[protein] + UDP + H(+). It functions in the pathway protein modification; protein glycosylation. Functionally, glycopeptide transferase involved in O-linked oligosaccharide biosynthesis, which catalyzes the transfer of an N-acetyl-D-galactosamine residue to an already glycosylated peptide. In contrast to other proteins of the family, it does not act as a peptide transferase that transfers GalNAc onto serine or threonine residue on the protein receptor, but instead requires the prior addition of a GalNAc on a peptide before adding additional GalNAc moieties. Some peptide transferase activity is however not excluded, considering that its appropriate peptide substrate may remain unidentified. The chain is N-acetylgalactosaminyltransferase 7 (GALNT7) from Pongo abelii (Sumatran orangutan).